The sequence spans 177 residues: Large ribosomal subunit protein uL6 (177 aa).

Over residues 154 to 171 the composition is skewed to basic and acidic residues; that stretch reads PEPYKGKGVRYADEQVRR. Residues 154-177 form a disordered region; that stretch reads PEPYKGKGVRYADEQVRRKEAKKK.

This sequence belongs to the universal ribosomal protein uL6 family. As to quaternary structure, part of the 50S ribosomal subunit.

Its function is as follows. This protein binds to the 23S rRNA, and is important in its secondary structure. It is located near the subunit interface in the base of the L7/L12 stalk, and near the tRNA binding site of the peptidyltransferase center. In Marinobacter nauticus (strain ATCC 700491 / DSM 11845 / VT8) (Marinobacter aquaeolei), this protein is Large ribosomal subunit protein uL6.